Consider the following 166-residue polypeptide: Twist-related protein (166 aa).

A compositionally biased stretch (low complexity) spans 1 to 18 (MMQEESSSPVSPVDSLSN). The disordered stretch occupies residues 1–83 (MMQEESSSPV…RVMANVRERQ (83 aa)). Over residues 28–39 (SKRGCRKRRSAR) the composition is skewed to basic residues. A compositionally biased stretch (polar residues) spans 57–75 (ASSTGSSPQSFEELQSQRV). One can recognise a bHLH domain in the interval 72 to 123 (SQRVMANVRERQRTQSLNEAFSSLRKIIPTLPSDKLSKIQTLKLASRYIDFL).

Efficient DNA binding requires dimerization with another bHLH protein. Homodimer. As to expression, subset of mesodermal cells.

The protein resides in the nucleus. Probable transcription factor, which may be involved, with other proteins, in establishing the pattern of cell type-specific gene expression in mesodermal cell subgroups. In Xenopus laevis (African clawed frog), this protein is Twist-related protein (twist1).